Consider the following 466-residue polypeptide: Asparagine--tRNA ligase (466 aa).

The protein belongs to the class-II aminoacyl-tRNA synthetase family. As to quaternary structure, homodimer.

It localises to the cytoplasm. The enzyme catalyses tRNA(Asn) + L-asparagine + ATP = L-asparaginyl-tRNA(Asn) + AMP + diphosphate + H(+). The protein is Asparagine--tRNA ligase of Aeromonas hydrophila subsp. hydrophila (strain ATCC 7966 / DSM 30187 / BCRC 13018 / CCUG 14551 / JCM 1027 / KCTC 2358 / NCIMB 9240 / NCTC 8049).